We begin with the raw amino-acid sequence, 181 residues long: Aminoglycoside 2'-N-acetyltransferase (181 aa).

The N-acetyltransferase domain occupies 11–162 (VHTADLDSET…DGTVFVLPID (152 aa)). Substrate-binding positions include Asp35 and 82 to 83 (EG). Residues 84-86 (VAV) and 91-96 (RGQRLV) each bind CoA. Substrate contacts are provided by residues Ser117 and 151–152 (DD).

It belongs to the AAC(2')-I acetyltransferase family. In terms of assembly, homodimer.

Its function is as follows. Catalyzes the coenzyme A-dependent acetylation of the 2' hydroxyl or amino group of a broad spectrum of aminoglycosides. It confers resistance to aminoglycosides. The sequence is that of Aminoglycoside 2'-N-acetyltransferase (aac) from Mycobacterium bovis (strain ATCC BAA-935 / AF2122/97).